The chain runs to 368 residues: Histidinol-phosphate aminotransferase 1 (368 aa).

At Lys224 the chain carries N6-(pyridoxal phosphate)lysine.

The protein belongs to the class-II pyridoxal-phosphate-dependent aminotransferase family. Histidinol-phosphate aminotransferase subfamily. As to quaternary structure, homodimer. The cofactor is pyridoxal 5'-phosphate.

It carries out the reaction L-histidinol phosphate + 2-oxoglutarate = 3-(imidazol-4-yl)-2-oxopropyl phosphate + L-glutamate. The protein operates within amino-acid biosynthesis; L-histidine biosynthesis; L-histidine from 5-phospho-alpha-D-ribose 1-diphosphate: step 7/9. The polypeptide is Histidinol-phosphate aminotransferase 1 (hisC1) (Rhizobium meliloti (strain 1021) (Ensifer meliloti)).